The sequence spans 358 residues: MKKKIILTGGGTAGHVTPNISLIPKLKELGYEVQYIGTKDGIEKSLIKKEGIKYHEISSGKLRRYFDLKNFTDPFKVLKGIMEARKIIKKEKPNIVFSKGGFVAVPVVIGAYLNKVPVISHESDMTPGLANKLSTPYCNKVCVTFPETLKYIKKDKGVLTGTPIREELFLGNEEKGKKICGFKDNKPIVLLVGGSLGSKILNNLIRENIEELLKKFNIIHICGKGNIEKTLENKEGYAQFEYVKEELPHFMKASNIVISRAGANSIFELLALAKPNLLVPLSKKASRGDQILNAKSFEKNGYSLVLEEEELSKKIFLDKLNYLYENREKYIKNMKNSSFKNGIDNIIDLIEKYYTMKN.

UDP-N-acetyl-alpha-D-glucosamine is bound by residues 12–14 (TAG), Arg165, Ser195, and Gln290.

This sequence belongs to the glycosyltransferase 28 family. MurG subfamily.

The protein resides in the cell membrane. It catalyses the reaction di-trans,octa-cis-undecaprenyl diphospho-N-acetyl-alpha-D-muramoyl-L-alanyl-D-glutamyl-meso-2,6-diaminopimeloyl-D-alanyl-D-alanine + UDP-N-acetyl-alpha-D-glucosamine = di-trans,octa-cis-undecaprenyl diphospho-[N-acetyl-alpha-D-glucosaminyl-(1-&gt;4)]-N-acetyl-alpha-D-muramoyl-L-alanyl-D-glutamyl-meso-2,6-diaminopimeloyl-D-alanyl-D-alanine + UDP + H(+). It functions in the pathway cell wall biogenesis; peptidoglycan biosynthesis. In terms of biological role, cell wall formation. Catalyzes the transfer of a GlcNAc subunit on undecaprenyl-pyrophosphoryl-MurNAc-pentapeptide (lipid intermediate I) to form undecaprenyl-pyrophosphoryl-MurNAc-(pentapeptide)GlcNAc (lipid intermediate II). The protein is UDP-N-acetylglucosamine--N-acetylmuramyl-(pentapeptide) pyrophosphoryl-undecaprenol N-acetylglucosamine transferase of Clostridium tetani (strain Massachusetts / E88).